The following is a 738-amino-acid chain: Transcription activator of gluconeogenesis SMAC_06113 (738 aa).

The interval 1–65 is disordered; that stretch reads MPDDVGPAEA…KYDPKDPLRP (65 aa). 2 stretches are compositionally biased toward basic and acidic residues: residues 28-39 and 51-64; these read ATTKDDDEKMAE and GDQKKKYDPKDPLR. The zn(2)-C6 fungal-type DNA-binding region spans 74–102; sequence CYACQRAHLTCGDERPCQRCIKRGLAEAC. 4 disordered regions span residues 255-278, 328-404, 530-579, and 636-673; these read SSGAAETPPRDPSISQQGTAGDVG, HAYA…KRQR, GTNS…KEQP, and SVPTTAGGSGSSNGTVVNGGPDSSPAGKTERERSTGAN. Composition is skewed to polar residues over residues 337 to 351 and 530 to 540; these read TSLQSPSTENNSPQP and GTNSDTLSVSS. Residues 475 to 546 form the PAS domain; that stretch reads ALFEHEEFMH…SVSSKGGRGG (72 aa). Composition is skewed to low complexity over residues 568 to 579 and 636 to 655; these read QQQQSQQQKEQP and SVPTTAGGSGSSNGTVVNGG.

The protein belongs to the ERT1/acuK family.

The protein localises to the nucleus. Its function is as follows. Transcription factor which regulates nonfermentable carbon utilization. Activator of gluconeogenetic genes. This Sordaria macrospora (strain ATCC MYA-333 / DSM 997 / K(L3346) / K-hell) protein is Transcription activator of gluconeogenesis SMAC_06113.